We begin with the raw amino-acid sequence, 266 residues long: Undecaprenyl-diphosphatase (266 aa).

Helical transmembrane passes span 1–21 (MTLL…FLPV), 40–60 (LPLY…LVVL), 90–110 (LLVV…KPIF), 113–133 (LNQP…LWFT), 145–165 (LSWL…IPGI), 188–208 (FSFL…IDEV), 217–237 (PLLG…LWLF), and 245–265 (FKWF…KVAM).

The protein belongs to the UppP family.

Its subcellular location is the cell inner membrane. It catalyses the reaction di-trans,octa-cis-undecaprenyl diphosphate + H2O = di-trans,octa-cis-undecaprenyl phosphate + phosphate + H(+). In terms of biological role, catalyzes the dephosphorylation of undecaprenyl diphosphate (UPP). Confers resistance to bacitracin. The protein is Undecaprenyl-diphosphatase of Acaryochloris marina (strain MBIC 11017).